The following is a 356-amino-acid chain: MDAYTARALSVLEGLAISGDPRSHRDPTTEATMSIFAMRFNSTTSRPVMGRPQRGKRGVITSTPQRCGIRDLEHHVAFVMPGYIQNPQTLAILARDEIPYTPSTFRRVQRYVSARMIIQMCERNDMLTPHYEAVTSPGVVLPAPAGGGPRCYAISATTLQIHIDPMQNEVLTPLIFPDQEDVIMAEFIWQRLANGIDNNAVMNMGTNVELLRDNAAVEGGTPFMATPRGIHVVLASYEPVNLCTIHLTCTRYWVTGPPRVVYDSMEADILAVYTYRDGFWDALRSYVLQALGMPAHHYPTRPVTEFRQNLAIAILSRLFDVYSQWRLRSTLQLRPKVLWWLAHRLQAALRAFRLGR.

Residue N41 is glycosylated (N-linked (GlcNAc...) asparagine; by host).

This sequence belongs to the orbivirus VP7 family.

It localises to the virion. In terms of biological role, the VP7 protein is one of the five proteins (with VP1, VP3, VP4, and VP6) which form the inner capsid of the virus. The protein is Core protein VP7 (Segment-7) of Broadhaven virus (BRD).